The primary structure comprises 190 residues: Probable chemoreceptor glutamine deamidase CheD (190 aa).

This sequence belongs to the CheD family.

It carries out the reaction L-glutaminyl-[protein] + H2O = L-glutamyl-[protein] + NH4(+). Functionally, probably deamidates glutamine residues to glutamate on methyl-accepting chemotaxis receptors (MCPs), playing an important role in chemotaxis. This chain is Probable chemoreceptor glutamine deamidase CheD, found in Acidiphilium cryptum (strain JF-5).